Here is a 154-residue protein sequence, read N- to C-terminus: Myoglobin (154 aa).

A Globin domain is found at 2–148 (GLSDGEWQLV…FRNDMAAKYK (147 aa)). S4 carries the post-translational modification Phosphoserine. H65 contacts nitrite. H65 serves as a coordination point for O2. Position 68 is a phosphothreonine (T68). H94 is a binding site for heme b.

It belongs to the globin family. As to quaternary structure, monomeric.

The protein localises to the cytoplasm. The protein resides in the sarcoplasm. It carries out the reaction Fe(III)-heme b-[protein] + nitric oxide + H2O = Fe(II)-heme b-[protein] + nitrite + 2 H(+). It catalyses the reaction H2O2 + AH2 = A + 2 H2O. In terms of biological role, monomeric heme protein which primary function is to store oxygen and facilitate its diffusion within muscle tissues. Reversibly binds oxygen through a pentacoordinated heme iron and enables its timely and efficient release as needed during periods of heightened demand. Depending on the oxidative conditions of tissues and cells, and in addition to its ability to bind oxygen, it also has a nitrite reductase activity whereby it regulates the production of bioactive nitric oxide. Under stress conditions, like hypoxia and anoxia, it also protects cells against reactive oxygen species thanks to its pseudoperoxidase activity. The protein is Myoglobin (MB) of Sus scrofa (Pig).